We begin with the raw amino-acid sequence, 30 residues long: 80 kDa carcinoembryonic antigen-binding protein (30 aa).

Binds to carcinoembryonic antigen (CEA). Post-translationally, the N-terminus is blocked.

It localises to the cell membrane. May play a role in the development of hepatic metastases from colorectal cancers. This is 80 kDa carcinoembryonic antigen-binding protein from Rattus norvegicus (Rat).